The sequence spans 309 residues: Solute carrier family 25 member 48 (309 aa).

Solcar repeat units follow at residues 3 to 86 (VFQL…TQRL), 99 to 209 (CSML…FCNW), and 218 to 305 (PPPC…SLQF). 6 consecutive transmembrane segments (helical) span residues 9 to 29 (FLAGWIGGASSVIVGHPLDTV), 61 to 81 (GLSFPLASITLYNSMVFGFFS), 105 to 125 (TVASMLTGLVSVGVGAPVDLV), 186 to 206 (GAMILRDIPGYALYFIPYTLF), 218 to 238 (PPPCCIWLAGGLAGSISWVTA), and 281 to 299 (ATVNAIRGFPMCATMFLGY).

The protein belongs to the mitochondrial carrier (TC 2.A.29) family.

It localises to the mitochondrion inner membrane. In Danio rerio (Zebrafish), this protein is Solute carrier family 25 member 48 (slc25a48).